Reading from the N-terminus, the 770-residue chain is ATP-dependent RNA helicase mak5 (770 aa).

The span at 1–10 shows a compositional bias: basic and acidic residues; the sequence is MGQKRQRDQK. Disordered stretches follow at residues 1–33 and 78–174; these read MGQK…ERES and NGQL…AKDR. Acidic residues predominate over residues 105-118; that stretch reads TEFDDEWNGFSDED. Composition is skewed to basic and acidic residues over residues 138–154 and 162–174; these read NGKK…IKAK and EQKE…AKDR. The short motif at 197-225 is the Q motif element; that stretch reads SAWEPLGLSPETLTSLSKLKFSTPTSVQK. Residues 228–437 form the Helicase ATP-binding domain; it reads IPPILDGHDV…AGKGKWTGGD (210 aa). 241–248 serves as a coordination point for ATP; it reads ASTGSGKT. Positions 363 to 366 match the DEAD box motif; sequence DEAD. A disordered region spans residues 384-404; that stretch reads LDRVEDGGPPDEEDDSSEENV. Acidic residues predominate over residues 391-401; the sequence is GPPDEEDDSSE. Positions 489–639 constitute a Helicase C-terminal domain; the sequence is YLYTLLLYHP…KLPLESLELD (151 aa). The segment at 693–713 is disordered; that stretch reads KGWGRGRGRGRQERDRQVGST.

This sequence belongs to the DEAD box helicase family. DDX24/MAK5 subfamily.

Its subcellular location is the nucleus. The protein resides in the nucleolus. It carries out the reaction ATP + H2O = ADP + phosphate + H(+). ATP-binding RNA helicase involved in the biogenesis of 60S ribosomal subunits and is required for the normal formation of 25S and 5.8S rRNAs. The polypeptide is ATP-dependent RNA helicase mak5 (mak5) (Emericella nidulans (strain FGSC A4 / ATCC 38163 / CBS 112.46 / NRRL 194 / M139) (Aspergillus nidulans)).